Consider the following 164-residue polypeptide: MMKTSAIHSPFEAPNTISLVAGTGDANNPLNAFDMSLLESGIGNLNLIRISSIMPPKAAIIPLPKIPQGSLVPTAYGYQISEVKGETVAAGISVAVPKDKELCGLIMEYECIGGKKECEDTVRNMAKEGFEMRGWEIDEIISIASEHTVENIGCAFAAAALWYK.

Ser-52 carries the post-translational modification Pyruvic acid (Ser).

This sequence belongs to the PdaD family. The cofactor is pyruvate.

It catalyses the reaction L-arginine + H(+) = agmatine + CO2. This chain is Pyruvoyl-dependent arginine decarboxylase, found in Methanococcus maripaludis (strain C7 / ATCC BAA-1331).